Reading from the N-terminus, the 566-residue chain is Pyrophosphate--fructose 6-phosphate 1-phosphotransferase subunit beta 1 (566 aa).

At S16 the chain carries Phosphoserine. Residue G105 coordinates diphosphate. Residue D199 participates in Mg(2+) binding. Residues T227–D229, K266–Y267, M274–R276, E335, and Y440–R443 contribute to the substrate site. D229 serves as the catalytic Proton acceptor.

It belongs to the phosphofructokinase type A (PFKA) family. PPi-dependent PFK group II subfamily. Clade 'Long' sub-subfamily. As to quaternary structure, tetramer of two alpha (regulatory) and two beta (catalytic) chains. Mg(2+) is required as a cofactor.

It localises to the cytoplasm. The enzyme catalyses beta-D-fructose 6-phosphate + diphosphate = beta-D-fructose 1,6-bisphosphate + phosphate + H(+). It participates in carbohydrate degradation; glycolysis; D-glyceraldehyde 3-phosphate and glycerone phosphate from D-glucose: step 3/4. Its activity is regulated as follows. Allosterically activated by fructose 2,6-bisphosphate. Functionally, catalytic subunit of pyrophosphate--fructose 6-phosphate 1-phosphotransferase. Catalyzes the phosphorylation of D-fructose 6-phosphate, the first committing step of glycolysis. Uses inorganic phosphate (PPi) as phosphoryl donor instead of ATP like common ATP-dependent phosphofructokinases (ATP-PFKs), which renders the reaction reversible, and can thus function both in glycolysis and gluconeogenesis. The polypeptide is Pyrophosphate--fructose 6-phosphate 1-phosphotransferase subunit beta 1 (Arabidopsis thaliana (Mouse-ear cress)).